We begin with the raw amino-acid sequence, 406 residues long: Putative permease Rv2963 (406 aa).

9 helical membrane passes run 30-50 (WEIL…QAVV), 67-87 (LVIA…AVAL), 111-131 (LVVE…TAAE), 132-152 (FVGG…FVGA), 208-228 (LAIL…AAWV), 246-266 (AVWG…CSIG), 278-298 (GISF…LPIL), 312-332 (VLLG…ELLF), and 361-381 (VIFL…GGLP).

This sequence belongs to the UPF0718 family.

Its subcellular location is the cell membrane. The sequence is that of Putative permease Rv2963 from Mycobacterium tuberculosis (strain ATCC 25618 / H37Rv).